The primary structure comprises 219 residues: Orotate phosphoribosyltransferase (219 aa).

Lysine 26 contributes to the 5-phospho-alpha-D-ribose 1-diphosphate binding site. 34–35 (FF) lines the orotate pocket. 5-phospho-alpha-D-ribose 1-diphosphate contacts are provided by residues 72-73 (YK), arginine 98, lysine 99, lysine 102, histidine 104, and 124-132 (DDVITAGTA). Residues threonine 128 and arginine 156 each contribute to the orotate site.

This sequence belongs to the purine/pyrimidine phosphoribosyltransferase family. PyrE subfamily. Homodimer. Mg(2+) is required as a cofactor.

The enzyme catalyses orotidine 5'-phosphate + diphosphate = orotate + 5-phospho-alpha-D-ribose 1-diphosphate. It participates in pyrimidine metabolism; UMP biosynthesis via de novo pathway; UMP from orotate: step 1/2. In terms of biological role, catalyzes the transfer of a ribosyl phosphate group from 5-phosphoribose 1-diphosphate to orotate, leading to the formation of orotidine monophosphate (OMP). The protein is Orotate phosphoribosyltransferase of Xanthomonas euvesicatoria pv. vesicatoria (strain 85-10) (Xanthomonas campestris pv. vesicatoria).